Consider the following 728-residue polypeptide: Polyribonucleotide nucleotidyltransferase (728 aa).

Residues D487 and D493 each contribute to the Mg(2+) site. The KH domain occupies 554–613 (PRIEVITVPTDKIREVIGTGGKVIREIVEKTGAKVDISDDGTIKVASSDGESIRKAIAWI). The S1 motif domain maps to 623–691 (GKIYEGTVVK…DRGKVRLSMK (69 aa)). Acidic residues predominate over residues 697-707 (TGEEIVYENEP). Residues 697–728 (TGEEIVYENEPAEQPREKREGGGGRGRRRERD) are disordered. Over residues 709–718 (EQPREKREGG) the composition is skewed to basic and acidic residues.

The protein belongs to the polyribonucleotide nucleotidyltransferase family. The cofactor is Mg(2+).

It is found in the cytoplasm. The catalysed reaction is RNA(n+1) + phosphate = RNA(n) + a ribonucleoside 5'-diphosphate. Functionally, involved in mRNA degradation. Catalyzes the phosphorolysis of single-stranded polyribonucleotides processively in the 3'- to 5'-direction. The chain is Polyribonucleotide nucleotidyltransferase from Parvibaculum lavamentivorans (strain DS-1 / DSM 13023 / NCIMB 13966).